The primary structure comprises 164 residues: Disulfide bond formation protein B (164 aa).

Over 1 to 4 the chain is Cytoplasmic; it reads MRII. Residues 5–21 form a helical membrane-spanning segment; the sequence is FLLIALICAGLVSYALY. The Periplasmic segment spans residues 22–39; that stretch reads LQLADGLLPCPLCIFQRM. Cysteines 31 and 34 form a disulfide. The chain crosses the membrane as a helical span at residues 40 to 56; sequence AYWLVGITALFAFIHHP. Residues 57-62 lie on the Cytoplasmic side of the membrane; the sequence is QRLGRR. Residues 63–80 form a helical membrane-spanning segment; it reads IYCGLIILFSLAGAIVAG. Topologically, residues 81 to 136 are periplasmic; the sequence is RQAWLVRFPEAFECGISPEEAFLNELPLARWWPDMFEANGDCTDGTWQFLSLTIPD. Cysteine 94 and cysteine 122 are joined by a disulfide. Residues 137 to 155 form a helical membrane-spanning segment; the sequence is WSLLIFLAFSLIAGLLWRS. Topologically, residues 156–164 are cytoplasmic; the sequence is RSISSSNLK.

Belongs to the DsbB family.

It is found in the cell inner membrane. In terms of biological role, required for disulfide bond formation in some periplasmic proteins. Acts by oxidizing the DsbA protein. In Nitrosomonas europaea (strain ATCC 19718 / CIP 103999 / KCTC 2705 / NBRC 14298), this protein is Disulfide bond formation protein B.